The sequence spans 111 residues: Ig kappa chain V-III region CBPC 101 (111 aa).

A framework-1 region spans residues 1-23 (DIVLTQSPASLAVSLGQRATISC). Cys-23 and Cys-92 are disulfide-bonded. Positions 24 to 38 (KASQSVDYTGESYMN) are complementarity-determining-1. Residues 39 to 53 (WYQQNPGQSPKLLIY) form a framework-2 region. A complementarity-determining-2 region spans residues 54-60 (AASNLES). The segment at 61–92 (GIPARFSGSGSGTDFTLNIHPVEEEDAATYYC) is framework-3. The complementarity-determining-3 stretch occupies residues 93-101 (QQSNEDPYT). A framework-4 region spans residues 102–111 (FGGGTKLEIK).

The polypeptide is Ig kappa chain V-III region CBPC 101 (Mus musculus (Mouse)).